The sequence spans 708 residues: MDNNNAFQLSFDEQHYAWLAIDVPGEKMNTLQAAFAEEMQAVFATLNEKRGQIKGLIIHSLKPDNFIAGADVRMLEACQSVHEAQALASQGQQMFQQLADLPFPVVAAIHGPCLGGGLELALACDYRVCTEDEVTRLGLPEVMLGLLPGSGGTQRLPRLIGLLPALDLILTGKQLRAKKAKKLGVVDACVPHSVLLDVAKRLLEEKGHKKRAQVTLPIKEKLLANTDLGRKLIFDQAAKKTQQKTRGNYPAAQAILEVIQYGLEKGMHAGLEYEAKRFAELVMTRESKALRSIFFATTEMKKDLGADAKPAPVAAVGVLGGGLMGAGISHVTVAKAKTSVRIKDVANDGVLNALNYNYKLFDKQRQRKILTKAQLQAQMSQLSGGTGFVGFDRCDVVIEAVFEDLKLKQQMVADIEANAKPTTIFATNTSSLPIHQIASQAQRPQNIVGLHYFSPVEKMPLVEVIPHATTSDETIATVVTLARKQGKTPIVVKDCAGFYVNRILAPYMNEAAQVLMAGEPIEKLDAALLDFGFPVGPITLLDEVGVDIGAKIMPILVKELGPRFQGPDVFDVLLKDNRKGRKSGKGFYTYKGSKKKEVDKSVYKLLKLTPESKLNDKEIAMRCLLPMLNEAVRCLDEGIIRSARDGDMGAIFGIGFPPFLGGPFRYMDTLGLTKVVEMMNQHTEKYGERFAPCDGLLTRAGLGEKFYP.

Residues 1 to 191 (MDNNNAFQLS…KLGVVDACVP (191 aa)) form an enoyl-CoA hydratase region. The interval 311-708 (APVAAVGVLG…RAGLGEKFYP (398 aa)) is 3-hydroxyacyl-CoA dehydrogenase.

This sequence in the N-terminal section; belongs to the enoyl-CoA hydratase/isomerase family. In the central section; belongs to the 3-hydroxyacyl-CoA dehydrogenase family. As to quaternary structure, heterotetramer of two alpha chains (FadJ) and two beta chains (FadI).

The protein localises to the cytoplasm. The enzyme catalyses a (3S)-3-hydroxyacyl-CoA = a (2E)-enoyl-CoA + H2O. The catalysed reaction is a 4-saturated-(3S)-3-hydroxyacyl-CoA = a (3E)-enoyl-CoA + H2O. It carries out the reaction a (3S)-3-hydroxyacyl-CoA + NAD(+) = a 3-oxoacyl-CoA + NADH + H(+). It catalyses the reaction (3S)-3-hydroxybutanoyl-CoA = (3R)-3-hydroxybutanoyl-CoA. It functions in the pathway lipid metabolism; fatty acid beta-oxidation. In terms of biological role, catalyzes the formation of a hydroxyacyl-CoA by addition of water on enoyl-CoA. Also exhibits 3-hydroxyacyl-CoA epimerase and 3-hydroxyacyl-CoA dehydrogenase activities. This Vibrio cholerae serotype O1 (strain ATCC 39315 / El Tor Inaba N16961) protein is Fatty acid oxidation complex subunit alpha.